The chain runs to 662 residues: Glycogen debranching enzyme (662 aa).

Asp-338 serves as the catalytic Nucleophile. Glu-373 functions as the Proton donor in the catalytic mechanism.

It belongs to the glycosyl hydrolase 13 family.

The enzyme catalyses Hydrolysis of (1-&gt;6)-alpha-D-glucosidic linkages to branches with degrees of polymerization of three or four glucose residues in limit dextrin.. It functions in the pathway glycan degradation; glycogen degradation. In terms of biological role, removes maltotriose and maltotetraose chains that are attached by 1,6-alpha-linkage to the limit dextrin main chain, generating a debranched limit dextrin. This chain is Glycogen debranching enzyme, found in Yersinia pseudotuberculosis serotype O:1b (strain IP 31758).